Here is a 148-residue protein sequence, read N- to C-terminus: UPF0260 protein YcgN (148 aa).

Belongs to the UPF0260 family.

In Salmonella paratyphi A (strain AKU_12601), this protein is UPF0260 protein YcgN.